A 347-amino-acid polypeptide reads, in one-letter code: Heme A synthase (347 aa).

Transmembrane regions (helical) follow at residues 14 to 34, 96 to 116, 129 to 149, 162 to 182, 199 to 219, 260 to 280, 287 to 307, and 311 to 331; these read VKIWLCICCIGILIMVFIGGI, FHRLLGRIVGLVFLIPFLYFM, FILIAFLILVQGVMGWYMVKS, LAMHLLLALAIFYLLWKHFLL, VFYIIISLITIQITCGALVAG, FIHEVIALLILIIAVITLLVL, MYLLLALLLIQLTLGILTFIY, and IILASLHQVTAFILFASSIYL. His262 serves as a coordination point for heme. His317 contacts heme.

The protein belongs to the COX15/CtaA family. Type 2 subfamily. Interacts with CtaB. Heme b is required as a cofactor.

The protein resides in the cell membrane. It carries out the reaction Fe(II)-heme o + 2 A + H2O = Fe(II)-heme a + 2 AH2. Its pathway is porphyrin-containing compound metabolism; heme A biosynthesis; heme A from heme O: step 1/1. In terms of biological role, catalyzes the conversion of heme O to heme A by two successive hydroxylations of the methyl group at C8. The first hydroxylation forms heme I, the second hydroxylation results in an unstable dihydroxymethyl group, which spontaneously dehydrates, resulting in the formyl group of heme A. This chain is Heme A synthase, found in Ehrlichia ruminantium (strain Gardel).